The primary structure comprises 141 residues: ATP synthase epsilon chain (141 aa).

The protein belongs to the ATPase epsilon chain family. In terms of assembly, F-type ATPases have 2 components, CF(1) - the catalytic core - and CF(0) - the membrane proton channel. CF(1) has five subunits: alpha(3), beta(3), gamma(1), delta(1), epsilon(1). CF(0) has three main subunits: a, b and c.

It localises to the cell membrane. In terms of biological role, produces ATP from ADP in the presence of a proton gradient across the membrane. This is ATP synthase epsilon chain from Lactococcus lactis subsp. lactis (strain IL1403) (Streptococcus lactis).